An 887-amino-acid chain; its full sequence is DNA gyrase subunit A (887 aa).

Residues 35–501 (LPDVRDGLKP…GFENLEDEDL (467 aa)) enclose the Topo IIA-type catalytic domain. Tyr-123 acts as the O-(5'-phospho-DNA)-tyrosine intermediate in catalysis. The short motif at 528–534 (QNRGGRG) is the GyrA-box element. Positions 811 to 864 (KEDAEDETNEDEQSTSTVSEDGTEQQREAVVNDETPGNAIHTEVIDSEENDEDG) are disordered. Positions 813 to 823 (DAEDETNEDEQ) are enriched in acidic residues.

The protein belongs to the type II topoisomerase GyrA/ParC subunit family. In terms of assembly, heterotetramer, composed of two GyrA and two GyrB chains. In the heterotetramer, GyrA contains the active site tyrosine that forms a transient covalent intermediate with DNA, while GyrB binds cofactors and catalyzes ATP hydrolysis.

It is found in the cytoplasm. The catalysed reaction is ATP-dependent breakage, passage and rejoining of double-stranded DNA.. A type II topoisomerase that negatively supercoils closed circular double-stranded (ds) DNA in an ATP-dependent manner to modulate DNA topology and maintain chromosomes in an underwound state. Negative supercoiling favors strand separation, and DNA replication, transcription, recombination and repair, all of which involve strand separation. Also able to catalyze the interconversion of other topological isomers of dsDNA rings, including catenanes and knotted rings. Type II topoisomerases break and join 2 DNA strands simultaneously in an ATP-dependent manner. This chain is DNA gyrase subunit A, found in Staphylococcus aureus (strain COL).